An 83-amino-acid chain; its full sequence is Kunitz-type serine protease inhibitor tigerin-3 (83 aa).

An N-terminal signal peptide occupies residues 1–24 (MSSGGLLLLLGLLTLWEILTPVSS). The region spanning 31-81 (CHLPHDTGPCNRNTQAFYYNPVYHTCLKFIYGGCQGNSNNFKTIDECKRTC) is the BPTI/Kunitz inhibitor domain. 3 cysteine pairs are disulfide-bonded: Cys31–Cys81, Cys40–Cys64, and Cys56–Cys77.

Belongs to the venom Kunitz-type family. As to expression, expressed by the venom gland.

Its subcellular location is the secreted. In terms of biological role, serine protease inhibitor. In Notechis scutatus scutatus (Mainland tiger snake), this protein is Kunitz-type serine protease inhibitor tigerin-3.